The chain runs to 207 residues: Macrophage immunometabolism regulator (207 aa).

Met-1 is subject to N-acetylmethionine. The tract at residues 1–41 (MEVDINGDSRSTLTTLPLPVAEGSSPGKAEAEKPRCSSTPC) is disordered. Residues Ser-25 and Ser-167 each carry the phosphoserine modification.

Belongs to the UNC119-binding protein family. As to quaternary structure, interacts with UNC119 and UNC119B; interaction preferentially takes place when UNC119 and UNC119B are unliganded with myristoylated proteins. As to expression, highly expressed in photoreceptors.

The protein localises to the cytoplasm. It localises to the cell projection. Its subcellular location is the cilium. Its function is as follows. Regulates the macrophage function, by enhancing the resolution of inflammation and wound repair functions mediated by M2 macrophages. The regulation of macrophage function is, due at least in part, to its ability to inhibit glycolysis. May also play a role in trafficking of proteins via its interaction with UNC119 and UNC119B cargo adapters: may help the release of UNC119 and UNC119B cargo or the recycling of UNC119 and UNC119B. May play a role in ciliary membrane localization via its interaction with UNC119B and protein transport into photoreceptor cells. In Mus musculus (Mouse), this protein is Macrophage immunometabolism regulator.